The primary structure comprises 709 residues: DNA ligase (709 aa).

NAD(+) is bound by residues 34 to 38 (DAEYD), 83 to 84 (SL), and glutamate 115. The N6-AMP-lysine intermediate role is filled by lysine 117. 4 residues coordinate NAD(+): arginine 138, glutamate 185, lysine 301, and lysine 325. Zn(2+) contacts are provided by cysteine 419, cysteine 422, cysteine 437, and cysteine 443. The BRCT domain occupies 602-691 (RQSDTLAGKT…AEPPPSPPPP (90 aa)). The tract at residues 679-709 (GTTAEPPPSPPPPPPETNTDGNQLLLPLDGE) is disordered. The segment covering 683 to 694 (EPPPSPPPPPPE) has biased composition (pro residues).

This sequence belongs to the NAD-dependent DNA ligase family. LigA subfamily. The cofactor is Mg(2+). Mn(2+) is required as a cofactor.

The enzyme catalyses NAD(+) + (deoxyribonucleotide)n-3'-hydroxyl + 5'-phospho-(deoxyribonucleotide)m = (deoxyribonucleotide)n+m + AMP + beta-nicotinamide D-nucleotide.. In terms of biological role, DNA ligase that catalyzes the formation of phosphodiester linkages between 5'-phosphoryl and 3'-hydroxyl groups in double-stranded DNA using NAD as a coenzyme and as the energy source for the reaction. It is essential for DNA replication and repair of damaged DNA. In Chloroflexus aurantiacus (strain ATCC 29364 / DSM 637 / Y-400-fl), this protein is DNA ligase.